Consider the following 132-residue polypeptide: Matrix protein (132 aa).

The protein localises to the virion membrane. Envelope protein that may play a role in host-cell attachment and viral genome entry. The polypeptide is Matrix protein (Halorubrum pleomorphic virus 1 (HRPV-1)).